The chain runs to 415 residues: Heterogeneous nuclear ribonucleoprotein F (415 aa).

Met1 is modified (N-acetylmethionine). Met2 carries the N-acetylmethionine; in Heterogeneous nuclear ribonucleoprotein F, N-terminally processed modification. The RRM 1 domain occupies 13–85 (VKLRGLPWSC…ESMGHRYIEV (73 aa)). Lys72 is covalently cross-linked (Glycyl lysine isopeptide (Lys-Gly) (interchain with G-Cter in SUMO)). The interval 81-86 (RYIEVF) is interaction with RNA. Lys87 is covalently cross-linked (Glycyl lysine isopeptide (Lys-Gly) (interchain with G-Cter in SUMO2)). Ser104, Ser107, and Ser161 each carry phosphoserine. Residues 111 to 188 (GFVRLRGLPF…RYIEVFKSSQ (78 aa)) form the RRM 2 domain. Residue Lys167 forms a Glycyl lysine isopeptide (Lys-Gly) (interchain with G-Cter in SUMO2) linkage. The segment at 179–184 (RYIEVF) is interaction with RNA. Residue Lys185 forms a Glycyl lysine isopeptide (Lys-Gly) (interchain with G-Cter in SUMO2) linkage. Phosphoserine occurs at positions 187, 193, and 195. The residue at position 200 (Lys200) is an N6-acetyllysine; alternate. Lys200 is covalently cross-linked (Glycyl lysine isopeptide (Lys-Gly) (interchain with G-Cter in SUMO2); alternate). At Thr215 the chain carries Phosphothreonine. At Lys224 the chain carries N6-acetyllysine; alternate. Lys224 participates in a covalent cross-link: Glycyl lysine isopeptide (Lys-Gly) (interchain with G-Cter in SUMO2); alternate. Ser265 is modified (phosphoserine). An RRM 3 domain is found at 289-366 (HCVHMRGLPY…IELFLNSTTG (78 aa)). Residues 355 to 360 (RYIELF) form an interaction with RNA region.

Identified in the spliceosome C complex. Interacts with AGO1, AGO2, TBP and TXNL4/DIM1. Sumoylated.

Its subcellular location is the nucleus. The protein resides in the nucleoplasm. Its function is as follows. Component of the heterogeneous nuclear ribonucleoprotein (hnRNP) complexes which provide the substrate for the processing events that pre-mRNAs undergo before becoming functional, translatable mRNAs in the cytoplasm. Plays a role in the regulation of alternative splicing events. Binds G-rich sequences in pre-mRNAs and keeps target RNA in an unfolded state. The polypeptide is Heterogeneous nuclear ribonucleoprotein F (HNRNPF) (Macaca fascicularis (Crab-eating macaque)).